The following is a 579-amino-acid chain: Leucine-rich repeat-containing protein 15 (579 aa).

The signal sequence occupies residues 1–21; the sequence is MPLKHYLLLLVSCQAWAAGLA. The LRRNT domain occupies 22–53; it reads YYGCPSECTCSRASQVECTGAQIVAMPSPLPW. The Extracellular segment spans residues 22 to 536; the sequence is YYGCPSECTC…TWGMTDAQSG (515 aa). LRR repeat units follow at residues 54-75, 78-99, 102-123, 126-147, 150-171, 174-195, 198-219, 222-243, 246-267, 270-291, 294-315, 318-339, 342-363, 366-387, and 390-411; these read NAMS…KFLN, ALIA…AFRN, SLRH…LFQD, NLET…QFSQ, NLKE…VFDH, GLTK…VFQH, NLQV…TFDA, NLQE…LFHN, NLQR…IFMQ, HLNK…VFGP, NLRE…AFSH, QLQV…AFNG, NLRE…VFRS, NLRN…IFAN, and GLMT…IFDH. N-linked (GlcNAc...) asparagine glycosylation is present at N75. An N-linked (GlcNAc...) asparagine glycan is attached at N369. Residues 423–473 enclose the LRRCT domain; that stretch reads NPWRCDSNILPLHDWLILNRARLGTDTLPVCSSPASVRGQSLVIINVNFPG. A disordered region spans residues 476-509; it reads VQGPETPEVSSYPDTSSYPDSTSISSTTEITRST. Residues 485-506 show a composition bias toward low complexity; it reads SSYPDTSSYPDSTSISSTTEIT. A helical membrane pass occupies residues 537–557; that stretch reads LAIAAIVIGIIALACSLAACI. Over 558 to 579 the chain is Cytoplasmic; sequence CCCCCKKRSQAVLMQMKAPNEC.

Expressed in chodrocytes (at protein level).

Its subcellular location is the cell membrane. This Mus musculus (Mouse) protein is Leucine-rich repeat-containing protein 15 (Lrrc15).